A 374-amino-acid chain; its full sequence is DNA replication and repair protein RecF (374 aa).

34–41 (GDNGAGKT) serves as a coordination point for ATP.

This sequence belongs to the RecF family.

Its subcellular location is the cytoplasm. The RecF protein is involved in DNA metabolism; it is required for DNA replication and normal SOS inducibility. RecF binds preferentially to single-stranded, linear DNA. It also seems to bind ATP. This Rhizobium johnstonii (strain DSM 114642 / LMG 32736 / 3841) (Rhizobium leguminosarum bv. viciae) protein is DNA replication and repair protein RecF.